The primary structure comprises 179 residues: UPF0227 protein PM0825 (179 aa).

The protein belongs to the UPF0227 family.

In Pasteurella multocida (strain Pm70), this protein is UPF0227 protein PM0825.